Consider the following 72-residue polypeptide: Translation initiation factor IF-1 (72 aa).

The region spanning 1–72 is the S1-like domain; sequence MAKDDVIEVD…DKGRITFRYK (72 aa).

The protein belongs to the IF-1 family. As to quaternary structure, component of the 30S ribosomal translation pre-initiation complex which assembles on the 30S ribosome in the order IF-2 and IF-3, IF-1 and N-formylmethionyl-tRNA(fMet); mRNA recruitment can occur at any time during PIC assembly.

It localises to the cytoplasm. Functionally, one of the essential components for the initiation of protein synthesis. Stabilizes the binding of IF-2 and IF-3 on the 30S subunit to which N-formylmethionyl-tRNA(fMet) subsequently binds. Helps modulate mRNA selection, yielding the 30S pre-initiation complex (PIC). Upon addition of the 50S ribosomal subunit IF-1, IF-2 and IF-3 are released leaving the mature 70S translation initiation complex. This is Translation initiation factor IF-1 from Nitratiruptor sp. (strain SB155-2).